Here is a 332-residue protein sequence, read N- to C-terminus: Homeobox protein SIX3 (332 aa).

The interaction with TLE5 stretch occupies residues 72–119 (APPEELSMFQLPTLNFSPEQVASVCETLEETGDIERLGRFLWSLPVAP). The homeobox DNA-binding region spans 206–265 (GEQKTHCFKERTRSLLREWYLQDPYPNPSKKRELAQATGLTPTQVGNWFKNRRQRDRAAA). The tract at residues 232 to 234 (NPS) is bind to RHO promoter. Disordered regions lie at residues 232 to 251 (NPSK…TQVG) and 258 to 332 (RQRD…ECDV). Over residues 293–309 (SAESPSTAASPTTSVSS) the composition is skewed to low complexity. The span at 316–332 (TGTSILSVTSSDSECDV) shows a compositional bias: polar residues.

Belongs to the SIX/Sine oculis homeobox family. As to quaternary structure, interacts with EYA4; translocates EYA4 from the cytoplasm to the nucleus and promotes activation of their target genes. Interacts with MTA1 and HDAC2; represses its own transcription. Interacts with MTA1; facilitates the binding of SIX3 to the core DNA motif of SIX3 promoter. Interacts with EYA1; promotes EYA1 translocation to the nucleus. Interacts with TLE1 and TLE5 (via Q domain); can act in combination with either TLE1 and/or TLE5 leading to transcriptional repression or activation, respectively. Interacts (via homeobox) with NR4A3; differentially regulates the transcriptional activities NR4A3. Interacts with GMNN. Interacts with TLE4.

It is found in the nucleus. Functionally, transcriptional regulator which can act as both a transcriptional repressor and activator by binding a ATTA homeodomain core recognition sequence on these target genes. During forebrain development represses WNT1 expression allowing zona limitans intrathalamica formation and thereby ensuring proper anterio-posterior patterning of the diencephalon and formation of the rostral diencephalon. Acts as a direct upstream activator of SHH expression in the rostral diencephalon ventral midline and that in turn SHH maintains its expression. In addition, Six3 activity is required for the formation of the telencephalon. During postnatal stages of brain development is necessary for ependymal cell maturation by promoting the maturation of radial glia into ependymal cells through regulation of neuroblast proliferation and migration. Acts on the proliferation and differentiation of neural progenitor cells through activating transcription of CCND1 and CCND2. During early lens formation plays a role in lens induction and specification by activating directly PAX6 in the presumptive lens ectoderm. In turn PAX6 activates SIX3 resulting in activation of PDGFRA and CCND1 promoting cell proliferation. Also is required for the neuroretina development by directly suppressing WNT8B expression in the anterior neural plate territory. Its action during retina development and lens morphogenesis is TLE5 and TLE4-dependent manner. Furthermore, during eye development regulates several genes expression. Before and during early lens development represses the CRYGF promoter by binding a SIX repressor element. Directly activates RHO transcription, or cooperates with CRX or NRL. Six3 also functions in the formation of the proximodistal axis of the optic cup, and promotes the formation of optic vesicles-like structures. During pituitary development, acts in parallel or alternatively with HESX1 to control cell proliferation through Wnt/beta-catenin pathway. Plays a role in eye development by suppressing WNT1 expression and in dorsal-ventral patterning by repressing BMP signaling pathway. This Homo sapiens (Human) protein is Homeobox protein SIX3 (SIX3).